Here is a 420-residue protein sequence, read N- to C-terminus: Glucose-1-phosphate adenylyltransferase (420 aa).

Alpha-D-glucose 1-phosphate-binding positions include tyrosine 107, glycine 173, glutamate 188 to lysine 189, and serine 206.

This sequence belongs to the bacterial/plant glucose-1-phosphate adenylyltransferase family. In terms of assembly, homotetramer.

It catalyses the reaction alpha-D-glucose 1-phosphate + ATP + H(+) = ADP-alpha-D-glucose + diphosphate. It functions in the pathway glycan biosynthesis; glycogen biosynthesis. Functionally, involved in the biosynthesis of ADP-glucose, a building block required for the elongation reactions to produce glycogen. Catalyzes the reaction between ATP and alpha-D-glucose 1-phosphate (G1P) to produce pyrophosphate and ADP-Glc. This chain is Glucose-1-phosphate adenylyltransferase, found in Shewanella sp. (strain W3-18-1).